Here is a 213-residue protein sequence, read N- to C-terminus: Guanylate kinase (213 aa).

The 179-residue stretch at 12-190 folds into the Guanylate kinase-like domain; sequence GLCLVVAAPS…AIDQVRTILH (179 aa). Position 19-26 (19-26) interacts with ATP; it reads APSGAGKS.

It belongs to the guanylate kinase family.

The protein localises to the cytoplasm. The catalysed reaction is GMP + ATP = GDP + ADP. Essential for recycling GMP and indirectly, cGMP. The protein is Guanylate kinase of Granulibacter bethesdensis (strain ATCC BAA-1260 / CGDNIH1).